A 1223-amino-acid polypeptide reads, in one-letter code: Kinesin-like protein costa (1223 aa).

In terms of domain architecture, Kinesin motor spans 4 to 394; it reads PIQVAVRICP…LQFAFKVQCV (391 aa). A disordered region spans residues 13 to 90; that stretch reads PYTEPSENRK…LPTDSNGNEN (78 aa). Basic and acidic residues predominate over residues 39 to 62; the sequence is AKAESFSDSEDNKNDASNRQRPEE. 178-185 contributes to the ATP binding site; sequence GQRGQGKT. 3 disordered regions span residues 494–528, 560–604, and 625–646; these read RSQK…ESQR, KHPK…SIQP, and TAQP…ESSA. The segment covering 569 to 593 has biased composition (basic and acidic residues); sequence QERDKESKLDAPPEKDKEKIEERKT. Coiled coils occupy residues 658–743, 773–825, and 982–1015; these read AAAN…QGRE, ESGQ…GASG, and NKVI…ERVL. A disordered region spans residues 774–799; the sequence is SGQKLKKLQQSMAESRKQQEELEKKI. Basic and acidic residues predominate over residues 787–799; the sequence is ESRKQQEELEKKI. Residues 1162 to 1178 are compositionally biased toward low complexity; the sequence is TTTATATTTTTTTTTTT. The segment at 1162 to 1188 is disordered; sequence TTTATATTTTTTTTTTTGGKGKERGLP.

This sequence belongs to the TRAFAC class myosin-kinesin ATPase superfamily. Kinesin family. KIF27 subfamily. As to quaternary structure, homodimer (Potential). Binds microtubules. Interacts with ci, smo, sgg, CkIalpha and protein kinase A catalytic subunit.

The protein resides in the cytoplasm. The protein localises to the cytoskeleton. In terms of biological role, regulates cubitus interruptus (ci) processing by recruiting multiple kinases to promote its efficient phosphorylation. Scaffolds multiple kinases and ci into proximity to promote its hyperphosphorylation, which then targets it for SCFSlimb/proteasome-mediated processing to generate its repressor form. Hh signaling inhibits ci phosphorylation by interfering with the cos-ci-kinases complex formation. The polypeptide is Kinesin-like protein costa (cos) (Drosophila pseudoobscura pseudoobscura (Fruit fly)).